The chain runs to 196 residues: RNA-binding protein with multiple splicing (196 aa).

M1 carries the post-translational modification N-acetylmethionine. T12 is modified (phosphothreonine). Residues 24–101 (RTLFVSGLPL…QTLRLEFAKA (78 aa)) enclose the RRM domain. The interval 98-105 (FAKANTKM) is interaction with RNA. T113 is modified (phosphothreonine).

As to quaternary structure, homodimer; each protein chain binds one RNA molecule via the external surface of the homodimer. Interacts with RNA binding proteins MBNL1, RBFOX2, RBM4 and RBM14; the interaction allows cooperative assembly of stable cell-specific alternative splicing regulatory complexes. Interacts with SMAD2, SMAD3 and SMAD4; the interactions are direct. In terms of tissue distribution, ubiquitously expressed, at various levels depending on the isoform and the tissue. Strongly expressed in the heart, prostate, small intestine, large intestine, and ovary; moderately expressed in the placenta, lung, liver, kidney, pancreas, and testis; and poorly expressed in the skeletal muscle, spleen, thymus and peripheral leukocytes.

It localises to the nucleus. The protein resides in the cytoplasm. It is found in the stress granule. The protein localises to the P-body. Functionally, RNA binding protein that mediates the regulation of pre-mRNA alternative splicing (AS). Acts either as activator (FLNB, HSPG2, LIPA1, MYOCD, PTPRF and PPFIBP1) or repressor (TPM1, ACTN1, ITGA7, PIEZO1, LSM14B, MBNL1 and MBML2) of splicing events on specific pre-mRNA targets. Together with RNA binding proteins RBFOX2 and MBNL1/2, activates a splicing program associated with differentiated contractile vascular smooth muscle cells (SMC) by regulating AS of numerous pre-mRNA involved in actin cytoskeleton and focal adhesion machineries, suggesting a role in promoting a cell differentiated state. Binds to introns, exons and 3'-UTR associated with tandem CAC trinucleotide motifs separated by a variable spacer region, at a minimum as a dimer. The minimal length of RNA required for RBPMS-binding tandem CAC motifs is 15 nt, with spacing ranging from 1 to 9 nt. Can also bind to CA dinucleotide repeats. Mediates repression of TPM1 exon 3 by binding to CAC tandem repeats in the flanking intronic regions, followed by higher-order oligomerization and heterotypic interactions with other splicing regulators including MBNL1 and RBFOX2, which prevents assembly of ATP-dependent splicing complexes. In terms of biological role, acts as a regulator of pre-mRNA alternative splicing (AS). Binds mRNA. Regulates AS of ACTN1, FLNB, although with lower efficiency than isoform A / RBPMSA. Acts as coactivator of SMAD transcriptional activity in a TGFB1-dependent manner, possibly through increased phosphorylation of SMAD2 and SMAD3 at the C-terminal SSXS regions and promotion of the nuclear accumulation of SMAD proteins. In Homo sapiens (Human), this protein is RNA-binding protein with multiple splicing.